A 197-amino-acid polypeptide reads, in one-letter code: Probable GTP-binding protein EngB (197 aa).

Residues 22-194 enclose the EngB-type G domain; the sequence is DLPEIAFAGR…LETIARMTGI (173 aa). GTP-binding positions include 30–37, 57–61, 75–78, 142–145, and 173–175; these read GRSNVGKS, GKTRL, DLPG, TKAD, and FST. Ser37 and Thr59 together coordinate Mg(2+).

The protein belongs to the TRAFAC class TrmE-Era-EngA-EngB-Septin-like GTPase superfamily. EngB GTPase family. Requires Mg(2+) as cofactor.

Its function is as follows. Necessary for normal cell division and for the maintenance of normal septation. This chain is Probable GTP-binding protein EngB, found in Desulfosudis oleivorans (strain DSM 6200 / JCM 39069 / Hxd3) (Desulfococcus oleovorans).